A 238-amino-acid polypeptide reads, in one-letter code: Probable transcriptional regulatory protein YcdB (238 aa).

It belongs to the TACO1 family. YeeN subfamily.

Its subcellular location is the cytoplasm. This is Probable transcriptional regulatory protein YcdB (ycdB) from Lactococcus lactis subsp. lactis (strain IL1403) (Streptococcus lactis).